Here is a 406-residue protein sequence, read N- to C-terminus: Vacuole membrane protein 1 (406 aa).

Residue A2 is modified to N-acetylalanine. Residues 2-43 are Cytoplasmic-facing; the sequence is AENGQNCDQRRVAMNKEQYNGNFTDPSSVNEKKRRDREERQN. The helical transmembrane segment at 44–63 threads the bilayer; it reads IVLWRQPLITLQYFSLETLV. The Extracellular portion of the chain corresponds to 64 to 77; sequence ILKEWTSKLWHRQS. The chain crosses the membrane as a helical span at residues 78–98; that stretch reads IVVSFLLLLAVLTATYYVEGA. The Cytoplasmic portion of the chain corresponds to 99–109; the sequence is HQQYVQRIEKQ. The chain crosses the membrane as a helical span at residues 110-130; that stretch reads FLLYAYWIGLGILSSVGLGTG. The Extracellular portion of the chain corresponds to 131-250; it reads LHTFLLYLGP…ASRAKLAVQN (120 aa). A VTT domain region spans residues 173–316; that stretch reads GTEGTISLWS…FVIVAFSKHI (144 aa). A helical transmembrane segment spans residues 251–271; that stretch reads LVQKVGFFGILACASIPNPLF. Over 272-273 the chain is Cytoplasmic; sequence DL. The chain crosses the membrane as a helical span at residues 274 to 294; that stretch reads AGITCGHFLVPFWTFFGATLI. Residues 295–306 are Extracellular-facing; sequence GKAIIKMHIQKL. A helical transmembrane segment spans residues 307–327; it reads FVIVAFSKHIVEQMVAFIGAV. At 328 to 363 the chain is on the cytoplasmic side; the sequence is PGIGPSLQKPFQEYLEAQRQKLHHRSEMGTPQGENW. Residues 364-384 traverse the membrane as a helical segment; that stretch reads LSWMFEKLVVVMVCYFILSII. Residues 385 to 406 are Extracellular-facing; it reads NSMAQSYAKRIQQRLDPKEKTK.

It belongs to the VMP1 family. As to quaternary structure, interacts with BECN1. Interacts with TJP1. Interacts with TP53INP2. Interacts with TMEM41B. Interacts with ATP2A2, PLN and SLN; competes with PLN and SLN to prevent them from forming an inhibitory complex with ATP2A2. Interacts with ATG2A.

It localises to the endoplasmic reticulum-Golgi intermediate compartment membrane. Its subcellular location is the cell membrane. The protein localises to the vacuole membrane. It is found in the endoplasmic reticulum membrane. It carries out the reaction a 1,2-diacyl-sn-glycero-3-phospho-L-serine(in) = a 1,2-diacyl-sn-glycero-3-phospho-L-serine(out). It catalyses the reaction cholesterol(in) = cholesterol(out). The enzyme catalyses a 1,2-diacyl-sn-glycero-3-phosphocholine(in) = a 1,2-diacyl-sn-glycero-3-phosphocholine(out). The catalysed reaction is a 1,2-diacyl-sn-glycero-3-phosphoethanolamine(in) = a 1,2-diacyl-sn-glycero-3-phosphoethanolamine(out). In terms of biological role, phospholipid scramblase involved in lipid homeostasis and membrane dynamics processes. Has phospholipid scramblase activity toward cholesterol and phosphatidylserine, as well as phosphatidylethanolamine and phosphatidylcholine. Required for autophagosome formation: participates in early stages of autophagosome biogenesis at the endoplasmic reticulum (ER) membrane by reequilibrating the leaflets of the ER as lipids are extracted by ATG2 (ATG2A or ATG2B) to mediate autophagosome assembly. Regulates ATP2A2 activity to control ER-isolation membrane contacts for autophagosome formation. In addition to autophagy, involved in other processes in which phospholipid scramblase activity is required. Modulates ER contacts with lipid droplets, mitochondria and endosomes. Plays an essential role in formation of cell junctions. Upon stress such as bacterial and viral infection, promotes formation of cytoplasmic vacuoles followed by cell death. Involved in the cytoplasmic vacuolization of acinar cells during the early stage of acute pancreatitis. The chain is Vacuole membrane protein 1 from Bos taurus (Bovine).